A 129-amino-acid polypeptide reads, in one-letter code: QVPFAPRPVIPGAFVPIVSQNFDLNGVDGSYTFSYESADGSARQESGVVNAPGTPLEAQAVQGSYTYVGTDGVPVQVNYVADENGFQPVGNVVAPAISRAVAAQVAQARAEGPILPGVPTPIPFRGRPF.

Glutamine 1 bears the Pyrrolidone carboxylic acid mark. In terms of domain architecture, Chitin-binding type R&amp;R spans 28 to 98 (DGSYTFSYES…VGNVVAPAIS (71 aa)). A glycan (O-linked (HexNAc...) threonine) is linked at threonine 120.

Functionally, component of the abdominal endocuticle. The chain is Endocuticle structural glycoprotein SgAbd-9 from Schistocerca gregaria (Desert locust).